The following is a 238-amino-acid chain: Ribosomal RNA small subunit methyltransferase G (238 aa).

S-adenosyl-L-methionine is bound by residues Gly75, Leu80, 126-127 (AE), and Arg142.

The protein belongs to the methyltransferase superfamily. RNA methyltransferase RsmG family.

It localises to the cytoplasm. In terms of biological role, specifically methylates the N7 position of guanine in position 518 of 16S rRNA. In Streptomyces avermitilis (strain ATCC 31267 / DSM 46492 / JCM 5070 / NBRC 14893 / NCIMB 12804 / NRRL 8165 / MA-4680), this protein is Ribosomal RNA small subunit methyltransferase G.